Consider the following 946-residue polypeptide: Serine/threonine-protein kinase PLK4 (946 aa).

In terms of domain architecture, Protein kinase spans 12 to 265; it reads FKVLNLLGKG…LSSVLDHAFM (254 aa). Residues 18 to 26 and Lys-41 contribute to the ATP site; that span reads LGKGSFACV. The active-site Proton acceptor is the Asp-136. The interval 330–395 is disordered; the sequence is HPAERSNGGS…TYGKPSSFSE (66 aa). Residues 378-394 show a composition bias toward polar residues; the sequence is RSGTSQSQTYGKPSSFS. Residues 566 to 679 enclose the Cryptic POLO box 1 (CPB1) domain; that stretch reads TLRSIISPLN…AKFIQLVRSK (114 aa). One can recognise a Cryptic POLO box 2 (CPB2) domain in the interval 680 to 792; sequence MPKVTYYTRY…GRRPAITESP (113 aa). The interval 789–828 is disordered; that stretch reads TESPRTQLTVDSARERKDEQSSANRVLHSSATSPPQIPNI. Residues 809-828 are compositionally biased toward polar residues; that stretch reads SSANRVLHSSATSPPQIPNI. Positions 864–942 constitute a POLO box domain; it reads QVLKSVFVEN…LSSILMLFAS (79 aa).

The protein belongs to the protein kinase superfamily. Ser/Thr protein kinase family. CDC5/Polo subfamily. As to quaternary structure, homodimer. Ubiquitinated; leading to its degradation by the proteasome.

It is found in the cytoplasm. The protein resides in the cytoskeleton. The protein localises to the microtubule organizing center. It localises to the centrosome. Its subcellular location is the centriole. The catalysed reaction is L-seryl-[protein] + ATP = O-phospho-L-seryl-[protein] + ADP + H(+). The enzyme catalyses L-threonyl-[protein] + ATP = O-phospho-L-threonyl-[protein] + ADP + H(+). Serine/threonine-protein kinase that plays a central role in centriole duplication. Able to trigger procentriole formation on the surface of the parental centriole cylinder, leading to the recruitment of centriole biogenesis proteins such as sass6, cpap, ccp110, cep135 and gamma-tubulin. When overexpressed, it is able to induce centrosome amplification through the simultaneous generation of multiple procentrioles adjoining each parental centriole during S phase. Its central role in centriole replication suggests a possible role in tumorigenesis, centrosome aberrations being frequently observed in tumors. Also involved in deuterosome-mediated centriole amplification in multiciliated that can generate more than 100 centrioles. The chain is Serine/threonine-protein kinase PLK4 from Xenopus tropicalis (Western clawed frog).